We begin with the raw amino-acid sequence, 475 residues long: Argininosuccinate lyase (475 aa).

This sequence belongs to the lyase 1 family. Argininosuccinate lyase subfamily.

Its subcellular location is the cytoplasm. The catalysed reaction is 2-(N(omega)-L-arginino)succinate = fumarate + L-arginine. It participates in amino-acid biosynthesis; L-arginine biosynthesis; L-arginine from L-ornithine and carbamoyl phosphate: step 3/3. The protein is Argininosuccinate lyase of Leifsonia xyli subsp. xyli (strain CTCB07).